Here is a 967-residue protein sequence, read N- to C-terminus: Siderophore exporter MmpL4 (967 aa).

11 helical membrane-spanning segments follow: residues 26 to 46, 210 to 230, 242 to 262, 303 to 323, 333 to 353, 384 to 404, 769 to 789, 793 to 813, 821 to 841, 875 to 895, and 913 to 934; these read AFAV…TVFV, VIFI…LLLI, VVAV…VSLL, AHVI…LSFA, IPCA…GPAV, WPLP…LALP, WDLL…MLII, FIAA…SFGL, ILAI…LLAV, VVTN…VSDL, and TLIV…WFWW. Residues 943–967 are disordered; that stretch reads ARTPTVPSETQPAGRPLAMSSDRLG.

This sequence belongs to the resistance-nodulation-cell division (RND) (TC 2.A.6) family. MmpL subfamily. As to quaternary structure, interacts with MmpS4.

The protein localises to the cell inner membrane. Functionally, part of an export system, which is required for biosynthesis and secretion of siderophores. This Mycobacterium tuberculosis (strain CDC 1551 / Oshkosh) protein is Siderophore exporter MmpL4 (mmpL4).